Reading from the N-terminus, the 242-residue chain is NAD-dependent protein deacylase 1 (242 aa).

The Deacetylase sirtuin-type domain maps to 1–242 (MDFKILKEKL…FAMKFEEKEG (242 aa)). Residue 21–40 (GAGISKESGIPTFRGEDGLW) coordinates NAD(+). Residues tyrosine 65 and arginine 68 each coordinate substrate. 99 to 102 (QNVD) lines the NAD(+) pocket. Residue histidine 117 is the Proton acceptor of the active site. Cysteine 125, cysteine 128, cysteine 146, and cysteine 149 together coordinate Zn(2+). Residues 186 to 188 (GTS) and glutamate 241 contribute to the NAD(+) site.

It belongs to the sirtuin family. Class III subfamily. It depends on Zn(2+) as a cofactor.

The protein resides in the cytoplasm. It catalyses the reaction N(6)-acetyl-L-lysyl-[protein] + NAD(+) + H2O = 2''-O-acetyl-ADP-D-ribose + nicotinamide + L-lysyl-[protein]. The enzyme catalyses N(6)-succinyl-L-lysyl-[protein] + NAD(+) + H2O = 2''-O-succinyl-ADP-D-ribose + nicotinamide + L-lysyl-[protein]. Its function is as follows. NAD-dependent lysine deacetylase and desuccinylase that specifically removes acetyl and succinyl groups on target proteins. Modulates the activities of several proteins which are inactive in their acylated form. The chain is NAD-dependent protein deacylase 1 from Caldanaerobacter subterraneus subsp. tengcongensis (strain DSM 15242 / JCM 11007 / NBRC 100824 / MB4) (Thermoanaerobacter tengcongensis).